The following is a 187-amino-acid chain: Large ribosomal subunit protein bL32m (187 aa).

The Zn(2+) site is built by Cys-109, Cys-112, Cys-122, and Cys-125.

Belongs to the bacterial ribosomal protein bL32 family. As to quaternary structure, component of the mitochondrial ribosome large subunit (39S) which comprises a 16S rRNA and about 50 distinct proteins. In terms of processing, MRPL32 precursor is processed by the m-AAA protease (composed of AFG3L2 and SPG7), which cleaves the N-terminal transit peptide. Cleavage by the m-AAA protease takes place prior to assembly into the large subunit, an essential step for mitochondrial ribosome (mitoribosome) assembly. Proper processing by the m-AAA protease is dependent on the zinc-binding region within the tightly folded C-terminal domain of MRPL32: zinc-dependent folding halts degradation initiated from the N-terminus and triggers the release of mature MRPL32.

It localises to the mitochondrion. Its function is as follows. Component of the mitochondrial large ribosomal subunit (mt-LSU). The mitochondrial ribosome (mitoribosome) is a large ribonucleoprotein complex responsible for the synthesis of proteins inside mitochondria. In Mus musculus (Mouse), this protein is Large ribosomal subunit protein bL32m (Mrpl32).